A 101-amino-acid chain; its full sequence is Gamma-secretase subunit PEN-2 (101 aa).

The Cytoplasmic portion of the chain corresponds to 1–17; the sequence is MNLERVSNEEKLNLCRK. An intramembrane region (helical) is located at residues 18-36; the sequence is YYLGGFAFLPFLWLVNIFW. The Cytoplasmic segment spans residues 37–57; that stretch reads FFKEAFFAPAYTEQSQIKGYV. The chain crosses the membrane as a helical span at residues 58–78; that stretch reads WRSAVGFLFWVIVLTTWITIF. Residues 79–101 are Lumenal-facing; the sequence is QIYRPRWGALGDYLSFTIPLGTP.

It belongs to the PEN-2 family. In terms of assembly, the functional gamma-secretase complex is composed of at least four polypeptides: a presenilin homodimer (PSEN1 or PSEN2), nicastrin (NCSTN), APH1 (APH1A or APH1B) and PSENEN.

The protein localises to the endoplasmic reticulum membrane. It localises to the golgi apparatus. The protein resides in the golgi stack membrane. Its subcellular location is the cell membrane. It is found in the membrane. In terms of biological role, essential subunit of the gamma-secretase complex, an endoprotease complex that catalyzes the intramembrane cleavage of integral membrane proteins such as Notch receptors and APP (amyloid-beta precursor protein). The gamma-secretase complex plays a role in Notch and Wnt signaling cascades and regulation of downstream processes via its role in processing key regulatory proteins, and by regulating cytosolic CTNNB1 levels. PSENEN modulates both endoproteolysis of presenilin and gamma-secretase activity. This is Gamma-secretase subunit PEN-2 (Psenen) from Rattus norvegicus (Rat).